We begin with the raw amino-acid sequence, 200 residues long: ATP synthase subunit s, mitochondrial (200 aa).

Residues 1–25 constitute a mitochondrion transit peptide; sequence MMLFGKVSQQLCGIKKLPWSCDSRY. The interval 1–61 is N-terminal domain; the sequence is MMLFGKVSQQ…SEWLLRCGAM (61 aa). Gly-59 contributes to the Mg(2+) binding site. LRR repeat units lie at residues 62 to 87, 88 to 116, 117 to 141, and 142 to 173; these read VRYH…KYKI, QAID…KIRL, CKCH…KSIL, and EMEI…LSDL. Mg(2+) is bound at residue Thr-93.

It belongs to the ATP synthase subunit s family. In terms of assembly, homotetramer. Associates with ATP synthase.

It localises to the mitochondrion. Its subcellular location is the mitochondrion inner membrane. In terms of biological role, involved in regulation of mitochondrial membrane ATP synthase. Necessary for H(+) conduction of ATP synthase. Facilitates energy-driven catalysis of ATP synthesis by blocking a proton leak through an alternative proton exit pathway. The polypeptide is ATP synthase subunit s, mitochondrial (DMAC2L) (Macaca fascicularis (Crab-eating macaque)).